The primary structure comprises 222 residues: MAEQAGAGSAQDNRGGGRDDRGGRGRRDDRGGRGGRDDREKSNYLERVVTINRVSKVVKGGRRFSFTALVIVGDGKGMVGVGYGKAKEVPAAIAKGVEEARKNFFRVPLIGGTVTHPVQGEAAAGVVMLRPASPGTGVIAGGACRAVLECAGVHDVLAKSLGSDNAINVVHATVAALKLLQRPEEVAARRGLPIEDVAPAGMLRARREAEALAVSAAREGTA.

A disordered region spans residues 1–41 (MAEQAGAGSAQDNRGGGRDDRGGRGRRDDRGGRGGRDDREK). Positions 15–41 (GGGRDDRGGRGRRDDRGGRGGRDDREK) are enriched in basic and acidic residues. In terms of domain architecture, S5 DRBM spans 44 to 107 (YLERVVTINR…EEARKNFFRV (64 aa)).

The protein belongs to the universal ribosomal protein uS5 family. As to quaternary structure, part of the 30S ribosomal subunit. Contacts proteins S4 and S8.

In terms of biological role, with S4 and S12 plays an important role in translational accuracy. Functionally, located at the back of the 30S subunit body where it stabilizes the conformation of the head with respect to the body. The protein is Small ribosomal subunit protein uS5 of Mycolicibacterium gilvum (strain PYR-GCK) (Mycobacterium gilvum (strain PYR-GCK)).